The primary structure comprises 451 residues: UDP-N-acetylmuramoylalanine--D-glutamate ligase (451 aa).

118-124 (GSNGKTT) lines the ATP pocket.

This sequence belongs to the MurCDEF family.

Its subcellular location is the cytoplasm. The catalysed reaction is UDP-N-acetyl-alpha-D-muramoyl-L-alanine + D-glutamate + ATP = UDP-N-acetyl-alpha-D-muramoyl-L-alanyl-D-glutamate + ADP + phosphate + H(+). Its pathway is cell wall biogenesis; peptidoglycan biosynthesis. Its function is as follows. Cell wall formation. Catalyzes the addition of glutamate to the nucleotide precursor UDP-N-acetylmuramoyl-L-alanine (UMA). This Shouchella clausii (strain KSM-K16) (Alkalihalobacillus clausii) protein is UDP-N-acetylmuramoylalanine--D-glutamate ligase.